Here is a 235-residue protein sequence, read N- to C-terminus: Putative uridine kinase C227.14 (235 aa).

36-43 (GGPGSGKS) is an ATP binding site.

It belongs to the uridine kinase family.

The protein resides in the cytoplasm. Its subcellular location is the nucleus. The enzyme catalyses uridine + ATP = UMP + ADP + H(+). It catalyses the reaction cytidine + ATP = CMP + ADP + H(+). It participates in pyrimidine metabolism; CTP biosynthesis via salvage pathway; CTP from cytidine: step 1/3. It functions in the pathway pyrimidine metabolism; UMP biosynthesis via salvage pathway; UMP from uridine: step 1/1. The chain is Putative uridine kinase C227.14 from Schizosaccharomyces pombe (strain 972 / ATCC 24843) (Fission yeast).